A 453-amino-acid polypeptide reads, in one-letter code: Protein amnionless (453 aa).

The signal sequence occupies residues 1–19 (MGVLGRVLLWLQLCALTQA). Residues 20 to 357 (VSKLWVPNTD…ESGAHVWGSS (338 aa)) lie on the Extracellular side of the membrane. N-linked (GlcNAc...) asparagine glycosylation is present at Asn35. Disulfide bonds link Cys43–Cys96, Cys137–Cys213, Cys205–Cys211, Cys223–Cys249, Cys234–Cys250, and Cys239–Cys253. Residues 67-87 (SDMLLPLDGELVLASGAGFGV) form an interaction with CUBN region. In terms of domain architecture, VWFC spans 202 to 254 (PEDCADPSGCVCGNAEAQPWICAALLQPLGGRCPQAACHSALRPQGQCCDLCG). A helical membrane pass occupies residues 358 to 378 (AAGLAGGVAAAVLLALLVLLV). Over 379 to 453 (APPLLRRAGR…PLFAGAEAEA (75 aa)) the chain is Cytoplasmic.

In terms of assembly, interacts (via extracellular region) with CUBN/cubilin, giving rise to a huge complex containing one AMN chain and three CUBN chains. N-glycosylated. Post-translationally, a soluble form arises by proteolytic removal of the membrane anchor. Detected in proximal tubules in the kidney cortex (at protein level). Long isoforms are highly expressed in small intestine, colon and kidney (renal proximal tubule epithelial cells). Shorter isoforms are detected at lower levels in testis, thymus and peripheral blood leukocytes.

Its subcellular location is the apical cell membrane. The protein resides in the cell membrane. It is found in the endosome membrane. It localises to the membrane. The protein localises to the coated pit. Its subcellular location is the secreted. Membrane-bound component of the endocytic receptor formed by AMN and CUBN. Required for normal CUBN glycosylation and trafficking to the cell surface. The complex formed by AMN and CUBN is required for efficient absorption of vitamin B12. Required for normal CUBN-mediated protein transport in the kidney. The polypeptide is Protein amnionless (AMN) (Homo sapiens (Human)).